We begin with the raw amino-acid sequence, 491 residues long: Anthranilate synthase component 1 (491 aa).

Residues Ser49 and 271–273 contribute to the L-tryptophan site; that span reads PYL. 306 to 307 contributes to the chorismate binding site; it reads GT. Residue Glu333 participates in Mg(2+) binding. Chorismate contacts are provided by residues Tyr421, Arg441, 455–457, and Gly457; that span reads GAG. Glu470 serves as a coordination point for Mg(2+).

Belongs to the anthranilate synthase component I family. Heterotetramer consisting of two non-identical subunits: a beta subunit (TrpG) and a large alpha subunit (TrpE). Mg(2+) is required as a cofactor.

The enzyme catalyses chorismate + L-glutamine = anthranilate + pyruvate + L-glutamate + H(+). The protein operates within amino-acid biosynthesis; L-tryptophan biosynthesis; L-tryptophan from chorismate: step 1/5. Its activity is regulated as follows. Feedback inhibited by tryptophan. Part of a heterotetrameric complex that catalyzes the two-step biosynthesis of anthranilate, an intermediate in the biosynthesis of L-tryptophan. In the first step, the glutamine-binding beta subunit (TrpG) of anthranilate synthase (AS) provides the glutamine amidotransferase activity which generates ammonia as a substrate that, along with chorismate, is used in the second step, catalyzed by the large alpha subunit of AS (TrpE) to produce anthranilate. In the absence of TrpG, TrpE can synthesize anthranilate directly from chorismate and high concentrations of ammonia. This Neisseria meningitidis serogroup B (strain ATCC BAA-335 / MC58) protein is Anthranilate synthase component 1 (trpE).